Here is a 350-residue protein sequence, read N- to C-terminus: Thymidine kinase (350 aa).

17–24 lines the ATP pocket; it reads GPFGIGKT. Glu-45 serves as the catalytic Proton acceptor. Gln-86 is a binding site for substrate. Arg-176 provides a ligand contact to ATP. Arg-182 contributes to the substrate binding site.

The protein belongs to the herpesviridae thymidine kinase family. In terms of assembly, homodimer.

It carries out the reaction thymidine + ATP = dTMP + ADP + H(+). In terms of biological role, catalyzes the transfer of the gamma-phospho group of ATP to thymidine to generate dTMP in the salvage pathway of pyrimidine synthesis. The dTMP serves as a substrate for DNA polymerase during viral DNA replication. Allows the virus to be reactivated and to grow in non-proliferative cells lacking a high concentration of phosphorylated nucleic acid precursors. This is Thymidine kinase from Gallus gallus (Chicken).